Consider the following 268-residue polypeptide: Helix-loop-helix protein 25 (268 aa).

Residues 1–23 (MPKVIQSSMSDYRSVPYNQTPKS) are compositionally biased toward polar residues. The tract at residues 1 to 29 (MPKVIQSSMSDYRSVPYNQTPKSASERKR) is disordered. The basic motif stretch occupies residues 92–105 (ERRKVKTEREKIRR). Residues 92 to 149 (ERRKVKTEREKIRRKKQDDCYAELKFFILNKQMGSYEQRLKLERITILEIIIDYIKHN) form the bHLH domain. The interval 106 to 149 (KKQDDCYAELKFFILNKQMGSYEQRLKLERITILEIIIDYIKHN) is helix-loop-helix motif.

The protein localises to the nucleus. In terms of biological role, probable transcription factor. Modulates lifespan and also recovery from the developmentally arrested larval state known as dauer, perhaps acting upstream of phosphatase PTEN/daf-18. Regulates expression of genes involved in cell division, cell-cycle regulation, and sexual reproduction, including daf-18. This chain is Helix-loop-helix protein 25, found in Caenorhabditis elegans.